The chain runs to 86 residues: Toxin Aam3 (86 aa).

Positions methionine 1 to serine 19 are cleaved as a signal peptide. Residues arginine 21–threonine 85 form the LCN-type CS-alpha/beta domain. 4 disulfides stabilise this stretch: cysteine 31–cysteine 84, cysteine 35–cysteine 56, cysteine 42–cysteine 66, and cysteine 46–cysteine 68.

The protein belongs to the long (4 C-C) scorpion toxin superfamily. Sodium channel inhibitor family. Alpha subfamily. Post-translationally, the C-terminal basic residue is removed by a carboxypeptidase. Expressed by the venom gland.

Its subcellular location is the secreted. In terms of biological role, alpha toxins bind voltage-independently at site-3 of sodium channels (Nav) and inhibit the inactivation of the activated channels, thereby blocking neuronal transmission. The protein is Toxin Aam3 of Androctonus amoreuxi (African fattail scorpion).